A 166-amino-acid chain; its full sequence is Transcription antitermination protein NusB (166 aa).

Over residues 1 to 18 (MISDESDRFNPRDPKPAD) the composition is skewed to basic and acidic residues. Residues 1–30 (MISDESDRFNPRDPKPADAGKPSKSAKRRE) form a disordered region.

It belongs to the NusB family.

Involved in transcription antitermination. Required for transcription of ribosomal RNA (rRNA) genes. Binds specifically to the boxA antiterminator sequence of the ribosomal RNA (rrn) operons. The chain is Transcription antitermination protein NusB from Pseudomonas fluorescens (strain Pf0-1).